Here is a 353-residue protein sequence, read N- to C-terminus: Mas-related G-protein coupled receptor member B5 (353 aa).

Residues 1–67 (MPDSPTESYG…SCIITFNTLN (67 aa)) are Extracellular-facing. 2 N-linked (GlcNAc...) asparagine glycosylation sites follow: N26 and N44. Residues 68 to 90 (FLTATISVVGTAGNATVLRLLGF) traverse the membrane as a helical segment. Over 91–96 (HMHRYA) the chain is Cytoplasmic. Residues 97 to 117 (FSVYVFNLAGADFLYLCTQTV) traverse the membrane as a helical segment. Over 118-131 (YSLECVLQFDNSYF) the chain is Extracellular. A helical membrane pass occupies residues 132 to 152 (YFLLTILMFAYLAALCMIPAI). Residues 153–180 (STERCLSVTWPIWYHCQRPRHTSATVCA) are Cytoplasmic-facing. The helical transmembrane segment at 181-201 (LFWAFSLLLRLLLGQGCGFLF) threads the bilayer. Residues 202–213 (GKYDYYFCRYCS) lie on the Extracellular side of the membrane. A helical membrane pass occupies residues 214 to 234 (FITTAFLIVLFVVPFVSSLAM). Residues 235 to 253 (LTKIICGSHRIPVTRFYVT) lie on the Cytoplasmic side of the membrane. A helical membrane pass occupies residues 254-274 (IAVTVLVFTFFGLPVGIISLL). Over 275 to 289 (LPRIVVFRGVFYIYK) the chain is Extracellular. The chain crosses the membrane as a helical span at residues 290–310 (IVTFLYSVNCCANPIIYFLIG). Topologically, residues 311 to 353 (SIRHHRLQRQSLKLLLQRAMQDTPEEEGGVKGPSQKSNELEIV) are cytoplasmic. Residues 333-353 (TPEEEGGVKGPSQKSNELEIV) form a disordered region.

It belongs to the G-protein coupled receptor 1 family. Mas subfamily. Expressed strongly in newborn dorsal root ganglia, adult dorsal root ganglia and trigeminal ganlia.

It is found in the membrane. Functionally, orphan receptor. Probably involved in the function of nociceptive neurons. May regulate nociceptor function and/or development, including the sensation or modulation of pain. The chain is Mas-related G-protein coupled receptor member B5 (Mrgprb5) from Rattus norvegicus (Rat).